We begin with the raw amino-acid sequence, 142 residues long: Probable histone H2AXb (142 aa).

Gly residues predominate over residues 1–12 (MSSGAGSGTTKG). Positions 1 to 28 (MSSGAGSGTTKGGRGKPKATKSVSRSSK) are disordered. Ser-139 bears the Phosphoserine; by ATM and ATR mark. A [ST]-Q motif motif is present at residues 139 to 140 (SQ).

Belongs to the histone H2A family. The nucleosome is a histone octamer containing two molecules each of H2A, H2B, H3 and H4 assembled in one H3-H4 heterotetramer and two H2A-H2B heterodimers. The octamer wraps approximately 147 bp of DNA. Interacts with numerous proteins required for DNA damage signaling and repair when phosphorylated on Ser-139. Post-translationally, phosphorylated to form H2AXS139ph (gamma-H2AX) in response to DNA double strand breaks (DSBs) generated by exogenous genotoxic agents and by stalled replication forks, and may also occur during meiotic recombination events. Phosphorylation can extend up to several thousand nucleosomes from the actual site of the DSB and may mark the surrounding chromatin for recruitment of proteins required for DNA damage signaling and repair. Widespread phosphorylation may also serve to amplify the damage signal or aid repair of persistent lesions. H2AXS139ph in response to ionizing radiation is mediated by ATM while defects in DNA replication induce H2AXS139ph subsequent to activation of ATR. Dephosphorylation of H2AXS139ph by PP2A is required for DNA DSB repair. In terms of tissue distribution, expressed in meristems and dividing cells.

It localises to the nucleus. It is found in the chromosome. Variant histone H2A which replaces conventional H2A in a subset of nucleosomes. Nucleosomes wrap and compact DNA into chromatin, limiting DNA accessibility to the cellular machineries which require DNA as a template. Histones thereby play a central role in transcription regulation, DNA repair, DNA replication and chromosomal stability. DNA accessibility is regulated via a complex set of post-translational modifications of histones, also called histone code, and nucleosome remodeling. Required for checkpoint-mediated arrest of cell cycle progression in response to low doses of ionizing radiation and for efficient repair of DNA double strand breaks (DSBs) specifically when modified by C-terminal phosphorylation. The polypeptide is Probable histone H2AXb (Arabidopsis thaliana (Mouse-ear cress)).